Consider the following 662-residue polypeptide: Probable protein phosphatase CG10417 (662 aa).

The PPM-type phosphatase domain occupies 23–564; that stretch reads AVGASSMQGW…DNMTAVIVQF (542 aa). Aspartate 57 and glycine 58 together coordinate Mn(2+). 2 disordered regions span residues 219 to 275 and 288 to 374; these read DGVA…FKHT and GSND…DEDQ. 3 stretches are compositionally biased toward polar residues: residues 238–252, 261–275, and 288–319; these read DSNT…STKN, NDQN…FKHT, and GSND…INSS. Residues serine 289 and serine 306 each carry the phosphoserine modification. Acidic residues predominate over residues 320-334; it reads QDDEFTDDDADYEEN. Residues 337–347 show a composition bias toward polar residues; sequence VKSPDTSSAES. Residues 349-374 are compositionally biased toward acidic residues; the sequence is DCTENDDDGDEDGNEDSDEEETDEDQ. Aspartate 506 and aspartate 555 together coordinate Mn(2+). The span at 591–609 shows a compositional bias: polar residues; that stretch reads VSHSLNDQSASKRCASQNA. The segment at 591–662 is disordered; that stretch reads VSHSLNDQSA…KEVTIIVSSS (72 aa). Serine 592, serine 594, and serine 599 each carry phosphoserine. Over residues 616 to 637 the composition is skewed to basic and acidic residues; that stretch reads LEKNNSKRLKTDLEQENIKDRT. Residue threonine 637 is modified to Phosphothreonine. Phosphoserine occurs at positions 639 and 641.

The protein belongs to the PP2C family. Mg(2+) serves as cofactor. The cofactor is Mn(2+).

The enzyme catalyses O-phospho-L-seryl-[protein] + H2O = L-seryl-[protein] + phosphate. It carries out the reaction O-phospho-L-threonyl-[protein] + H2O = L-threonyl-[protein] + phosphate. This Drosophila melanogaster (Fruit fly) protein is Probable protein phosphatase CG10417.